The following is a 31-amino-acid chain: Photosystem II reaction center protein T (31 aa).

The helical transmembrane segment at A3–F23 threads the bilayer.

This sequence belongs to the PsbT family. PSII is composed of 1 copy each of membrane proteins PsbA, PsbB, PsbC, PsbD, PsbE, PsbF, PsbH, PsbI, PsbJ, PsbK, PsbL, PsbM, PsbT, PsbX, PsbY, Psb30/Ycf12, peripheral proteins PsbO, CyanoQ (PsbQ), PsbU, PsbV and a large number of cofactors. It forms dimeric complexes.

It localises to the cellular thylakoid membrane. Its function is as follows. Found at the monomer-monomer interface of the photosystem II (PS II) dimer, plays a role in assembly and dimerization of PSII. PSII is a light-driven water plastoquinone oxidoreductase, using light energy to abstract electrons from H(2)O, generating a proton gradient subsequently used for ATP formation. This Prochlorococcus marinus (strain MIT 9211) protein is Photosystem II reaction center protein T.